Reading from the N-terminus, the 2000-residue chain is Myosin-14 (2000 aa).

Ala2 is modified (N-acetylalanine). Thr33 bears the Phosphothreonine mark. A Myosin N-terminal SH3-like domain is found at 47 to 97 (TARRMVWVPSELHGFEAAALRDEGEEEAEVELAESGRRLRLPRDQIQRMNP). Ser56 bears the Phosphoserine mark. The 704-residue stretch at 101-804 (SKAEDMAELT…VLAQLEEERD (704 aa)) folds into the Myosin motor domain. 194–201 (GESGAGKT) lines the ATP pocket. The interval 682–704 (LSRLMATLSNTNPSFVRCIVPNH) is actin-binding. One can recognise an IQ domain in the interval 807–836 (VTDIIVSFQAAARGYLARRAFQRRQQQQSA). The stretch at 866–1951 (LQVTRQDEVL…VTTLRNRLRR (1086 aa)) forms a coiled coil. Ser925 is modified (phosphoserine). The tract at residues 1173–1197 (RGELEDTLDSTNAQQELRSKREQEV) is disordered. A Phosphothreonine modification is found at Thr1198. Residues Ser1249 and Ser1280 each carry the phosphoserine modification. Disordered regions lie at residues 1260-1311 (ELSS…AELE), 1597-1629 (HERD…RDEE), 1720-1751 (SDRA…TLEE), 1910-1942 (AEEE…NREV), and 1967-2000 (LEEG…ATPQ). Over residues 1290 to 1304 (SDSERARSEAAEKLQ) the composition is skewed to basic and acidic residues. Residues 1720–1732 (SDRARRQAQQDRD) show a composition bias toward basic and acidic residues. Residues 1971–1980 (VASDEEEAEG) are compositionally biased toward acidic residues. Phosphoserine occurs at positions 1973 and 1985. Positions 1981-1991 (AEPGSAPGQEP) are enriched in low complexity. Thr1998 carries the phosphothreonine modification.

Belongs to the TRAFAC class myosin-kinesin ATPase superfamily. Myosin family. As to quaternary structure, myosin is a hexameric protein that consists of 2 heavy chain subunits (MHC), 2 alkali light chain subunits (MLC) and 2 regulatory light chain subunits (MLC-2). Highest levels in lung, kidney, brain and colon, very low levels in liver and bladder and no expression in spleen or seminal vesicle (at protein level). Isoform 1 is expressed in liver, kidney and testis with low levels in skeletal muscle and heart. Isoform 1 and isoform 2 are expressed in brain and lung. Isoform 2 is the main isoform expressed in skeletal muscle and heart. Isoform 3 is limited to brain stem, cerebellum and spinal cord.

Its function is as follows. Cellular myosin that appears to play a role in cytokinesis, cell shape, and specialized functions such as secretion and capping. This chain is Myosin-14 (Myh14), found in Mus musculus (Mouse).